A 248-amino-acid polypeptide reads, in one-letter code: Mannose-binding protein C (248 aa).

The N-terminal stretch at 1 to 20 (MSLIPSLSLLLMSMVAASYS) is a signal peptide. Residues 42 to 99 (GINGFPGKDGRDGTKGEKGEPGQGLRGLQGPPGKLGPPGNPGPSGSPGPKGQKGDPGK) enclose the Collagen-like domain. Residues 43–107 (INGFPGKDGR…GKSPDCDSSL (65 aa)) form a disordered region. Position 47 is a 4-hydroxyproline (Pro47). Residues 49–61 (KDGRDGTKGEKGE) are compositionally biased toward basic and acidic residues. 4-hydroxyproline is present on residues Pro73, Pro79, Pro82, and Pro88. The span at 75–87 (KLGPPGNPGPSGS) shows a compositional bias: pro residues. Positions 93–102 (QKGDPGKSPD) are enriched in basic and acidic residues. Residues 112-130 (RKALQTEMARIKKWLTFSL) adopt a coiled-coil conformation. The C-type lectin domain maps to 134–245 (VGNKFFLTNG…CSSSHLAVCE (112 aa)). Disulfide bonds link Cys155–Cys244 and Cys222–Cys236.

Oligomeric complex of 3 or more homotrimers. Interacts with MASP1 and MASP2. Interacts with MEP1A and MEP1B and may inhibit their catalytic activity. Hydroxylation on proline residues within the sequence motif, GXPG, is most likely to be 4-hydroxy as this fits the requirement for 4-hydroxylation in vertebrates.

The protein localises to the secreted. Its function is as follows. Calcium-dependent lectin involved in innate immune defense. Binds mannose, fucose and N-acetylglucosamine on different microorganisms and activates the lectin complement pathway. Binds to late apoptotic cells, as well as to apoptotic blebs and to necrotic cells, but not to early apoptotic cells, facilitating their uptake by macrophages. In Hylobates lar (Lar gibbon), this protein is Mannose-binding protein C (MBL2).